Here is a 502-residue protein sequence, read N- to C-terminus: Zinc finger C3HC-type protein 1 (502 aa).

A2 carries the post-translational modification N-acetylalanine. A Phosphoserine modification is found at S24. T28 is modified (phosphothreonine). Residues L35 to S74 are disordered. A compositionally biased stretch (polar residues) spans Q50–S72. S58 and S62 each carry phosphoserine. Phosphothreonine is present on T84. The segment at C102 to C156 adopts a C3HC-type zinc-finger fold. The tract at residues S302–S423 is disordered. S321 and S329 each carry phosphoserine. At T333 the chain carries Phosphothreonine. Residues S338, S344, S354, S359, and S370 each carry the phosphoserine modification. Over residues R351 to P360 the composition is skewed to polar residues. Low complexity predominate over residues P371–R380. Residue S381 is modified to Phosphoserine. A Phosphothreonine modification is found at T384. Position 395 is a phosphoserine (S395). The short motif at P396–R402 is the Nuclear localization signal element. Phosphoserine is present on residues S407 and S483. The span at S407–T422 shows a compositional bias: low complexity.

Interacts with TPR; this interaction mediates ZC3HC1 nuclear envelopes (NE)-association but also required for proper positioning of a substantial amount of TPR at the nuclear basket (NB). Post-translationally, phosphorylated. May also be weakly phosphorylated on Tyr residues.

It localises to the nucleus. The protein resides in the nucleus envelope. Functionally, required for proper positioning of a substantial amount of TPR at the nuclear basket (NB) through interaction with TPR. This chain is Zinc finger C3HC-type protein 1 (ZC3HC1), found in Pongo abelii (Sumatran orangutan).